We begin with the raw amino-acid sequence, 515 residues long: 2-isopropylmalate synthase (515 aa).

In terms of domain architecture, Pyruvate carboxyltransferase spans 5–267; that stretch reads VIIFDTTLRD…HTGLDHKEIH (263 aa). Mn(2+) contacts are provided by Asp14, His202, His204, and Asn238. Residues 392-515 are regulatory domain; that stretch reads KLNYLSVQSG…EMKQQKFATV (124 aa).

It belongs to the alpha-IPM synthase/homocitrate synthase family. LeuA type 1 subfamily. As to quaternary structure, homodimer. Mn(2+) serves as cofactor.

The protein localises to the cytoplasm. It carries out the reaction 3-methyl-2-oxobutanoate + acetyl-CoA + H2O = (2S)-2-isopropylmalate + CoA + H(+). The protein operates within amino-acid biosynthesis; L-leucine biosynthesis; L-leucine from 3-methyl-2-oxobutanoate: step 1/4. In terms of biological role, catalyzes the condensation of the acetyl group of acetyl-CoA with 3-methyl-2-oxobutanoate (2-ketoisovalerate) to form 3-carboxy-3-hydroxy-4-methylpentanoate (2-isopropylmalate). The chain is 2-isopropylmalate synthase from Vibrio atlanticus (strain LGP32) (Vibrio splendidus (strain Mel32)).